A 54-amino-acid chain; its full sequence is Gene product 16.6 (54 aa).

Belongs to the phi29likevirus gp16.6 family.

This Bacillus subtilis (Bacteriophage phi-15) protein is Gene product 16.6 (16.6).